We begin with the raw amino-acid sequence, 245 residues long: MDSDHWISRLMAAKRQYALQRAQNHHHATATATATAASHSHLDRYGYDDVEPEDEVRPDFPCPYCYEDHDITSLCAHLEDEHPFESKVVACPVCSARISKDLLDHITLQHSYLFRLQRHHRLRRVAVPSNHALSLGGRDLQETYLKVLLGNSSRSSGTNAASSVTDSLLSSLVLNLSSSEAEDTAKFSALAVVENNWFKRTLPSKTWKASSDSNLSQEERERRRRRAAVRSSFVQHLLVSTLFDD.

The protein belongs to the Di19 family.

The sequence is that of Protein DEHYDRATION-INDUCED 19 homolog 4 (DI19-4) from Oryza sativa subsp. japonica (Rice).